A 381-amino-acid chain; its full sequence is Alkanesulfonate monooxygenase (381 aa).

Belongs to the SsuD family. Homotetramer.

The catalysed reaction is an alkanesulfonate + FMNH2 + O2 = an aldehyde + FMN + sulfite + H2O + 2 H(+). Functionally, catalyzes the desulfonation of aliphatic sulfonates. In Escherichia coli O8 (strain IAI1), this protein is Alkanesulfonate monooxygenase.